The following is a 364-amino-acid chain: B3 domain-containing protein At5g38490 (364 aa).

The disordered stretch occupies residues 148-202 (ASTSSSSLLNLPCLEPSTETKDVPNPNYQSSSPSSCLTGKTNRKRRAVEQRKSGK). The TF-B3 DNA-binding region spans 260–364 (FQKLIRNDFL…GVLCFALDTE (105 aa)).

Its subcellular location is the nucleus. The chain is B3 domain-containing protein At5g38490 from Arabidopsis thaliana (Mouse-ear cress).